The following is a 437-amino-acid chain: Serine hydroxymethyltransferase 2 (437 aa).

Residues leucine 125 and 129–131 (GHL) each bind (6S)-5,6,7,8-tetrahydrofolate. An N6-(pyridoxal phosphate)lysine modification is found at lysine 234.

The protein belongs to the SHMT family. As to quaternary structure, homodimer. Requires pyridoxal 5'-phosphate as cofactor.

The protein resides in the cytoplasm. It carries out the reaction (6R)-5,10-methylene-5,6,7,8-tetrahydrofolate + glycine + H2O = (6S)-5,6,7,8-tetrahydrofolate + L-serine. Its pathway is one-carbon metabolism; tetrahydrofolate interconversion. The protein operates within amino-acid biosynthesis; glycine biosynthesis; glycine from L-serine: step 1/1. Its function is as follows. Catalyzes the reversible interconversion of serine and glycine with tetrahydrofolate (THF) serving as the one-carbon carrier. This reaction serves as the major source of one-carbon groups required for the biosynthesis of purines, thymidylate, methionine, and other important biomolecules. Also exhibits THF-independent aldolase activity toward beta-hydroxyamino acids, producing glycine and aldehydes, via a retro-aldol mechanism. This Mesorhizobium japonicum (strain LMG 29417 / CECT 9101 / MAFF 303099) (Mesorhizobium loti (strain MAFF 303099)) protein is Serine hydroxymethyltransferase 2.